The chain runs to 775 residues: Dipeptidyl peptidase 4 (775 aa).

Positions 1 to 15 (MKLLSLLMLAGIAQA) are cleaved as a signal peptide. N-linked (GlcNAc...) asparagine glycans are attached at residues asparagine 81, asparagine 111, asparagine 154, and asparagine 219. Catalysis depends on charge relay system residues serine 613, aspartate 690, and histidine 725.

It belongs to the peptidase S9B family.

Its subcellular location is the secreted. It catalyses the reaction Release of an N-terminal dipeptide, Xaa-Yaa-|-Zaa-, from a polypeptide, preferentially when Yaa is Pro, provided Zaa is neither Pro nor hydroxyproline.. In terms of biological role, extracellular dipeptidyl-peptidase which removes N-terminal dipeptides sequentially from polypeptides having unsubstituted N-termini provided that the penultimate residue is proline. Contributes to pathogenicity. The polypeptide is Dipeptidyl peptidase 4 (DPP4) (Trichophyton rubrum (Athlete's foot fungus)).